A 716-amino-acid chain; its full sequence is Photosystem I P700 chlorophyll a apoprotein A1 (716 aa).

8 consecutive transmembrane segments (helical) span residues 57–80, 143–166, 182–206, 278–296, 333–356, 372–398, 420–442, and 518–536; these read VFSAHFGQLAIILIWLSGMYFHGA, LYCTAIGGLIFAGLMLFAGWFHYH, LNHHLAGLLGLGSLSWAGHQVHVSL, TVHHHLAIAILFLIAGHMY, WHAQLALNLAMLGSLTIVVAHHMY, LSLFTHHMWIGGFLIVGAAAHAAIFMV, AIISHLNWVCIFLGFHSFGLYIH, and FLVHHIHAFTIHVTVLILL. Residues Cys-560 and Cys-569 each coordinate [4Fe-4S] cluster. Transmembrane regions (helical) follow at residues 576 to 597 and 651 to 673; these read HVFLGLFWMYNAISVVIFHFSW and LSAYGLLFLGAHFVWAFSLMFLF. Position 662 (His-662) interacts with chlorophyll a'. Chlorophyll a contacts are provided by Met-670 and Tyr-678. Trp-679 lines the phylloquinone pocket. The chain crosses the membrane as a helical span at residues 711 to 716; that stretch reads AVGVAH.

It belongs to the PsaA/PsaB family. In terms of assembly, the PsaA/B heterodimer binds the P700 chlorophyll special pair and subsequent electron acceptors. PSI consists of a core antenna complex that captures photons, and an electron transfer chain that converts photonic excitation into a charge separation. The eukaryotic PSI reaction center is composed of at least 11 subunits. Requires P700 is a chlorophyll a/chlorophyll a' dimer, A0 is one or more chlorophyll a, A1 is one or both phylloquinones and FX is a shared 4Fe-4S iron-sulfur center. as cofactor.

It localises to the plastid. Its subcellular location is the chloroplast thylakoid membrane. It carries out the reaction reduced [plastocyanin] + hnu + oxidized [2Fe-2S]-[ferredoxin] = oxidized [plastocyanin] + reduced [2Fe-2S]-[ferredoxin]. In terms of biological role, psaA and PsaB bind P700, the primary electron donor of photosystem I (PSI), as well as the electron acceptors A0, A1 and FX. PSI is a plastocyanin-ferredoxin oxidoreductase, converting photonic excitation into a charge separation, which transfers an electron from the donor P700 chlorophyll pair to the spectroscopically characterized acceptors A0, A1, FX, FA and FB in turn. Oxidized P700 is reduced on the lumenal side of the thylakoid membrane by plastocyanin. The polypeptide is Photosystem I P700 chlorophyll a apoprotein A1 (Araucaria araucana (Monkey-puzzle tree)).